A 325-amino-acid chain; its full sequence is uncharacterized protein (325 aa).

Catalysis depends on Tyr-59, which acts as the Proton donor. His-117 is a binding site for substrate.

Belongs to the aldo/keto reductase family.

It is found in the cytoplasm. It localises to the nucleus. This is an uncharacterized protein from Schizosaccharomyces pombe (strain 972 / ATCC 24843) (Fission yeast).